The following is a 180-amino-acid chain: Large ribosomal subunit protein uL6 (180 aa).

Belongs to the universal ribosomal protein uL6 family. Part of the 50S ribosomal subunit.

Its function is as follows. This protein binds to the 23S rRNA, and is important in its secondary structure. It is located near the subunit interface in the base of the L7/L12 stalk, and near the tRNA binding site of the peptidyltransferase center. The polypeptide is Large ribosomal subunit protein uL6 (Borreliella afzelii (strain PKo) (Borrelia afzelii)).